A 334-amino-acid chain; its full sequence is Phospholipase A1 1 (334 aa).

The N-terminal stretch at 1-23 (MMNLKYLLFFCLVQALHYCYAYG) is a signal peptide. The propeptide occupies 24 to 33 (DPSLSNELDR). An intrachain disulfide couples Cys37 to Cys120. Ser170 serves as the catalytic Nucleophile. Asp198 functions as the Charge relay system in the catalytic mechanism. 2 cysteine pairs are disulfide-bonded: Cys209-Cys214 and Cys252-Cys261. His263 serves as the catalytic Charge relay system. Disulfide bonds link Cys278/Cys302, Cys279/Cys327, and Cys295/Cys300.

It belongs to the AB hydrolase superfamily. Lipase family. Post-translationally, not glycosylated. As to expression, expressed by the venom gland.

Its subcellular location is the secreted. The catalysed reaction is a 1,2-diacyl-sn-glycero-3-phosphocholine + H2O = a 2-acyl-sn-glycero-3-phosphocholine + a fatty acid + H(+). In terms of biological role, catalyzes the hydrolysis of phosphatidylcholine with phospholipase A1 activity (3.6 U/ml). May act as an allergen and induce hemolytic activity. In vivo, a mixture of this protein and Ves a 1.02 is able to paralyze crickets. This is Phospholipase A1 1 from Vespa affinis (Lesser banded hornet).